The sequence spans 528 residues: (R)-citramalate synthase (528 aa).

Positions 5-271 constitute a Pyruvate carboxyltransferase domain; the sequence is VYIYDTTLRD…IPQENLKKLT (267 aa).

Belongs to the alpha-IPM synthase/homocitrate synthase family.

The catalysed reaction is pyruvate + acetyl-CoA + H2O = (3R)-citramalate + CoA + H(+). It participates in amino-acid biosynthesis; L-isoleucine biosynthesis; 2-oxobutanoate from pyruvate: step 1/3. In terms of biological role, catalyzes the condensation of pyruvate and acetyl-coenzyme A to form (R)-citramalate. The sequence is that of (R)-citramalate synthase from Aquifex aeolicus (strain VF5).